Here is a 156-residue protein sequence, read N- to C-terminus: MPRRRVIGQRKILPDPKFGSELLAKFVNILMVDGKKSTAEAIVYSALETLAQRSGKEHLEAFELALDNVRPTVEVKSRRVGGSTYQVPVEVRPVRRNALAMRWIVEAARKRGDKSMALRLANELSDAAENKGTAVKKREDVHRMAEANKAFAHYRW.

Belongs to the universal ribosomal protein uS7 family. In terms of assembly, part of the 30S ribosomal subunit. Contacts proteins S9 and S11.

One of the primary rRNA binding proteins, it binds directly to 16S rRNA where it nucleates assembly of the head domain of the 30S subunit. Is located at the subunit interface close to the decoding center, probably blocks exit of the E-site tRNA. The polypeptide is Small ribosomal subunit protein uS7 (Photorhabdus laumondii subsp. laumondii (strain DSM 15139 / CIP 105565 / TT01) (Photorhabdus luminescens subsp. laumondii)).